An 837-amino-acid polypeptide reads, in one-letter code: CoA-transferase/lyase DddD (837 aa).

Aspartate 602 serves as the catalytic Nucleophile.

This sequence belongs to the CoA-transferase III family.

Dimethyl sulfide (DMS)-producing enzyme. Acts both as a transferase and a lyase: uses acetyl-coenzyme A (acetyl-coA) and dimethylsulfoniopropionate (DMSP) as substrates to produce DMS, acetate and 3-hydroxypropionate-CoA (3HP-CoA). Mediates the CoA-transferase prior to lyase activity. DMS is the principal form by which sulfur is transported from oceans to the atmosphere and is a key component of the ocean sulfur cycle. The polypeptide is CoA-transferase/lyase DddD (Marinomonas sp. (strain MWYL1)).